Reading from the N-terminus, the 1774-residue chain is Kinesin-like protein KIF20B (1774 aa).

The region spanning 58 to 477 (YLQVCLRIRP…LKFSTTAQRV (420 aa)) is the Kinesin motor domain. Residue 152–159 (GLTNSGKT) participates in ATP binding. Ser486 is modified (phosphoserine). 2 coiled-coil regions span residues 525-601 (EDVL…KIRE) and 705-747 (QEAI…LVQA). Residues 538–555 (EENEETQNMETELTDEDS) show a composition bias toward acidic residues. 2 disordered regions span residues 538–557 (EENEETQNMETELTDEDSDK) and 740–799 (ESNS…PPAK). Residues 741–778 (SNSLVQALKTSSKVDTSLTSNKSTCNETSEMPKNSRAQ) are compositionally biased toward polar residues. Over residues 779–788 (THSERKRLNE) the composition is skewed to basic and acidic residues. Positions 824-946 (SEVVEGNRVL…QMQTKIDELR (123 aa)) form a coiled coil. Residue Ser950 is modified to Phosphoserine. The interval 1002 to 1059 (ENSFHASIEAIWEECKEIVKASSKKSHQIQGLEEQIEKLQVEVKGYREENSDLRAQES) is necessary and sufficient for interaction with SHTN1. The stretch at 1021-1507 (KASSKKSHQI…DEEIQELRKA (487 aa)) forms a coiled coil. Phosphoserine occurs at positions 1107 and 1542. Positions 1514–1774 (TENQTMNPKP…KRRLRTRTAK (261 aa)) are interaction with PIN1. At Thr1598 the chain carries Phosphothreonine; by CDK1. Ser1612 is modified (phosphoserine). Residues 1625–1663 (KKNSTPRSNVKFPVSEHRNSPVKKEQKVSVGPSSKKTYS) form a disordered region. A compositionally biased stretch (basic and acidic residues) spans 1638–1651 (VSEHRNSPVKKEQK). Phosphoserine occurs at positions 1669 and 1694.

This sequence belongs to the TRAFAC class myosin-kinesin ATPase superfamily. Kinesin family. Oligomerizes (via kinesin motor domain). Associates with microtubules. Interacts (via C-terminal globular tail region) with PIN1 (via WW domain). Interacts with PRC1. Interacts with SHTN1 (via N-terminus); the interaction is direct and promotes the association of SHTN1 to microtubules in primary neurons. Associates with microtubules. In terms of processing, phosphorylated during mitosis by CDK1. Expressed in the brain (at protein level).

It localises to the nucleus. The protein localises to the cytoplasm. It is found in the cytoskeleton. The protein resides in the microtubule organizing center. Its subcellular location is the centrosome. It localises to the nucleolus. The protein localises to the nucleoplasm. It is found in the spindle. The protein resides in the spindle pole. Its subcellular location is the midbody. It localises to the cell projection. The protein localises to the axon. It is found in the growth cone. Its function is as follows. Plus-end-directed motor enzyme that is required for completion of cytokinesis. Required for proper midbody organization and abscission in polarized cortical stem cells. Plays a role in the regulation of neuronal polarization by mediating the transport of specific cargos. Participates in the mobilization of SHTN1 and in the accumulation of PIP3 in the growth cone of primary hippocampal neurons in a tubulin and actin-dependent manner. In the developing telencephalon, cooperates with SHTN1 to promote both the transition from the multipolar to the bipolar stage and the radial migration of cortical neurons from the ventricular zone toward the superficial layer of the neocortex. Involved in cerebral cortex growth. Acts as an oncogene for promoting bladder cancer cells proliferation, apoptosis inhibition and carcinogenic progression. The sequence is that of Kinesin-like protein KIF20B from Mus musculus (Mouse).